Here is a 466-residue protein sequence, read N- to C-terminus: UDP-N-acetylmuramoylalanine--D-glutamate ligase (466 aa).

ATP is bound at residue 117–123; sequence GTKGKTT.

The protein belongs to the MurCDEF family.

It is found in the cytoplasm. It catalyses the reaction UDP-N-acetyl-alpha-D-muramoyl-L-alanine + D-glutamate + ATP = UDP-N-acetyl-alpha-D-muramoyl-L-alanyl-D-glutamate + ADP + phosphate + H(+). It participates in cell wall biogenesis; peptidoglycan biosynthesis. In terms of biological role, cell wall formation. Catalyzes the addition of glutamate to the nucleotide precursor UDP-N-acetylmuramoyl-L-alanine (UMA). The polypeptide is UDP-N-acetylmuramoylalanine--D-glutamate ligase (Roseiflexus sp. (strain RS-1)).